The following is a 604-amino-acid chain: Glutamyl-tRNA(Gln) amidotransferase subunit B, mitochondrial (604 aa).

The transit peptide at 1 to 48 (MIRQCLSRRGAYSRYRLAARGVELAEPFHHQSSRPQGRRNWSSSPRCS) directs the protein to the mitochondrion. Positions 28 to 57 (FHHQSSRPQGRRNWSSSPRCSLDIRTDTPR) are disordered. Polar residues predominate over residues 33–46 (SRPQGRRNWSSSPR).

Belongs to the GatB/GatE family. GatB subfamily. Subunit of the heterotrimeric GatCAB amidotransferase (AdT) complex, composed of A, B and C subunits.

It localises to the mitochondrion. The catalysed reaction is L-glutamyl-tRNA(Gln) + L-glutamine + ATP + H2O = L-glutaminyl-tRNA(Gln) + L-glutamate + ADP + phosphate + H(+). Functionally, allows the formation of correctly charged Gln-tRNA(Gln) through the transamidation of misacylated Glu-tRNA(Gln) in the mitochondria. The reaction takes place in the presence of glutamine and ATP through an activated gamma-phospho-Glu-tRNA(Gln). The chain is Glutamyl-tRNA(Gln) amidotransferase subunit B, mitochondrial from Ajellomyces dermatitidis (strain ER-3 / ATCC MYA-2586) (Blastomyces dermatitidis).